A 175-amino-acid polypeptide reads, in one-letter code: uncharacterized protein (175 aa).

Residues 1–22 (MNRIVGILISILMLACIGVTMA) form the signal peptide.

This is an uncharacterized protein from Archaeoglobus fulgidus (strain ATCC 49558 / DSM 4304 / JCM 9628 / NBRC 100126 / VC-16).